The primary structure comprises 769 residues: Zinc finger protein 585B (769 aa).

Residues 1–12 are compositionally biased toward polar residues; it reads MPASWTSPQKSS. Positions 1–23 are disordered; it reads MPASWTSPQKSSALAPDDHGSSY. One can recognise a KRAB domain in the interval 27–97; it reads VSFRDVVINF…QGERPRHSCP (71 aa). 21 C2H2-type zinc fingers span residues 158–180, 186–208, 214–236, 242–264, 270–292, 298–320, 354–376, 382–404, 410–432, 438–460, 466–488, 494–516, 522–544, 550–572, 578–600, 606–628, 634–656, 662–684, 690–712, 718–740, and 746–768; these read YVCIECGRAFVQKPEFITHQKAH, YKCNECGKSVFQVSSLFRHQRIH, YQCSECGKGFPYNSDLSIHEKIH, HECTDCGKAFTQRSTLKMHQKIH, YICIECGQAFIQKTQLIAHRRIH, YECNNCGKSFISKSQLEVHQRIH, SICTECGKAFTYRSELIIHQRIH, YACSDCGKAFTQKSTLTVHQRIH, YVCMKCGLAFIRKAHLVTHQIIH, YKCGHCGKLFTSKSQLHVHKRIH, YVCNKCGKAFTNRSDLITHQKTH, YICSKCGKAFTQRSDLITHQRIH, YECNTCGKAFTQKSNLNIHQKIH, YECHECGKAFNQKSILIVHQKIH, YVCTECGRAFIRKSNFITHQRIH, YECSDCGKSFTSKSQLLVHQPLH, YVCAECGKAFSGRSNLSKHQKTH, YICSECGKTFRQKSELITHHRIH, YECSDCGKSFTKKSQLQVHQRIH, YVCAECGKAFSNRSNLNKHQTTH, and YKCGICGKGFVQKSVFSVHQGSH.

Belongs to the krueppel C2H2-type zinc-finger protein family.

It is found in the nucleus. May be involved in transcriptional regulation. The sequence is that of Zinc finger protein 585B (ZNF585B) from Pongo abelii (Sumatran orangutan).